A 493-amino-acid polypeptide reads, in one-letter code: Alpha-amylase-related protein (493 aa).

An N-terminal signal peptide occupies residues 1–19 (MFKFALTLTLCLAGSLSLA). The residue at position 20 (Gln-20) is a Pyrrolidone carboxylic acid. A disulfide bridge links Cys-47 with Cys-103. The Ca(2+) site is built by Asn-117, Gln-168, and Asp-177. Cys-156 and Cys-170 form a disulfide bridge. Arg-205 provides a ligand contact to chloride. The active-site Nucleophile is Asp-207. His-211 serves as a coordination point for Ca(2+). The Proton donor role is filled by Glu-244. Chloride-binding residues include Asn-307 and Arg-342. 3 disulfide bridges follow: Cys-375–Cys-381, Cys-417–Cys-440, and Cys-447–Cys-459.

This sequence belongs to the glycosyl hydrolase 13 family. In terms of assembly, monomer. It depends on Ca(2+) as a cofactor. Chloride is required as a cofactor. In terms of tissue distribution, midgut and fat body.

The protein localises to the secreted. The catalysed reaction is Endohydrolysis of (1-&gt;4)-alpha-D-glucosidic linkages in polysaccharides containing three or more (1-&gt;4)-alpha-linked D-glucose units.. The chain is Alpha-amylase-related protein (Amyrel) from Drosophila melanogaster (Fruit fly).